Consider the following 392-residue polypeptide: Formate-dependent phosphoribosylglycinamide formyltransferase (392 aa).

N(1)-(5-phospho-beta-D-ribosyl)glycinamide-binding positions include 22–23 and E82; that span reads EL. Residues R114, K155, 160–165, 195–198, and E203 each bind ATP; these read SSGKGQ and EGVV. Residues 119–308 enclose the ATP-grasp domain; that stretch reads RLAAEELQLP…EFALHVRAFL (190 aa). E267 and E279 together coordinate Mg(2+). N(1)-(5-phospho-beta-D-ribosyl)glycinamide contacts are provided by residues D286, K355, and 362 to 363; that span reads RR.

It belongs to the PurK/PurT family. Homodimer.

The enzyme catalyses N(1)-(5-phospho-beta-D-ribosyl)glycinamide + formate + ATP = N(2)-formyl-N(1)-(5-phospho-beta-D-ribosyl)glycinamide + ADP + phosphate + H(+). It participates in purine metabolism; IMP biosynthesis via de novo pathway; N(2)-formyl-N(1)-(5-phospho-D-ribosyl)glycinamide from N(1)-(5-phospho-D-ribosyl)glycinamide (formate route): step 1/1. Its function is as follows. Involved in the de novo purine biosynthesis. Catalyzes the transfer of formate to 5-phospho-ribosyl-glycinamide (GAR), producing 5-phospho-ribosyl-N-formylglycinamide (FGAR). Formate is provided by PurU via hydrolysis of 10-formyl-tetrahydrofolate. The protein is Formate-dependent phosphoribosylglycinamide formyltransferase of Shigella flexneri.